The sequence spans 211 residues: Thymidylate kinase (211 aa).

Residue 7-14 (GIDGCGKT) coordinates ATP.

The protein belongs to the thymidylate kinase family.

It carries out the reaction dTMP + ATP = dTDP + ADP. In terms of biological role, phosphorylation of dTMP to form dTDP in both de novo and salvage pathways of dTTP synthesis. This chain is Thymidylate kinase, found in Anaplasma marginale (strain Florida).